Consider the following 141-residue polypeptide: Large ribosomal subunit protein uL16 (141 aa).

Belongs to the universal ribosomal protein uL16 family. As to quaternary structure, part of the 50S ribosomal subunit.

Binds 23S rRNA and is also seen to make contacts with the A and possibly P site tRNAs. This Deinococcus geothermalis (strain DSM 11300 / CIP 105573 / AG-3a) protein is Large ribosomal subunit protein uL16.